We begin with the raw amino-acid sequence, 235 residues long: Ribitol-5-phosphate cytidylyltransferase (235 aa).

Residues 7 to 10 (LAGG), 82 to 88 (GADRNTS), and Ser113 each bind CTP.

Belongs to the IspD/TarI cytidylyltransferase family. TarI subfamily.

The catalysed reaction is D-ribitol 5-phosphate + CTP + H(+) = CDP-L-ribitol + diphosphate. Its pathway is cell wall biogenesis; poly(ribitol phosphate) teichoic acid biosynthesis. Its function is as follows. Catalyzes the transfer of the cytidylyl group of CTP to D-ribitol 5-phosphate. In Streptococcus pneumoniae serotype 2 (strain D39 / NCTC 7466), this protein is Ribitol-5-phosphate cytidylyltransferase.